The primary structure comprises 351 residues: GDSL esterase/lipase At4g26790 (351 aa).

The first 25 residues, 1–25 (MQRNRVLAFLLLAAQLLVKIPETCA), serve as a signal peptide directing secretion. The active-site Nucleophile is the Ser-36. Residue Asn-118 is glycosylated (N-linked (GlcNAc...) asparagine). Active-site residues include Asp-326 and His-329.

The protein belongs to the 'GDSL' lipolytic enzyme family.

The protein resides in the secreted. This Arabidopsis thaliana (Mouse-ear cress) protein is GDSL esterase/lipase At4g26790.